A 651-amino-acid polypeptide reads, in one-letter code: Acid beta-fructofuranosidase (651 aa).

Topologically, residues 1 to 23 (MEHHKPLLPTSSHAAPNPRTRKD) are cytoplasmic. Residues 1-103 (MEHHKPLLPT…LFSGEGGASE (103 aa)) constitute a propeptide, removed in mature form. A helical; Signal-anchor for type II membrane protein membrane pass occupies residues 24-44 (LLLLLCALLFLSSLVAFGRNR). Over 45–651 (ASNVPHDHVS…PFPFNPDQKN (607 aa)) the chain is Lumenal. The interval 48 to 76 (VPHDHVSSSASNHQQEHQSPTSLPSSKWH) is disordered. The segment covering 54-72 (SSSASNHQQEHQSPTSLPS) has biased composition (polar residues). Residues 127-130 (WMND), Gln146, Trp154, and 189-190 (WT) contribute to the substrate site. Residue Asp130 is part of the active site. Residue Asn210 is glycosylated (N-linked (GlcNAc...) asparagine). Residue 253–254 (RD) participates in substrate binding. A glycan (N-linked (GlcNAc...) asparagine) is linked at Asn275. Substrate-binding residues include Glu308 and Asp343. An intrachain disulfide couples Cys500 to Cys548. Asn620 is a glycosylation site (N-linked (GlcNAc...) asparagine).

Belongs to the glycosyl hydrolase 32 family. As to quaternary structure, may be present in two forms, a 70 kDa monomer and a heterodimer of the 30 kDa and 38 kDa subunits. The ratio of the levels of the two forms within cells appears to be regulated developmentally.

The protein localises to the membrane. The protein resides in the vacuole lumen. The enzyme catalyses Hydrolysis of terminal non-reducing beta-D-fructofuranoside residues in beta-D-fructofuranosides.. It participates in glycan biosynthesis; sucrose metabolism. The sequence is that of Acid beta-fructofuranosidase from Phaseolus vulgaris (Kidney bean).